Here is a 319-residue protein sequence, read N- to C-terminus: Ornithine carbamoyltransferase (319 aa).

Carbamoyl phosphate is bound by residues 63–66, glutamine 90, arginine 114, and 141–144; these read STRT and HPCQ. Residues asparagine 172, aspartate 236, and 240–241 each bind L-ornithine; that span reads SM. Residues 276–277 and arginine 304 contribute to the carbamoyl phosphate site; that span reads CL.

This sequence belongs to the aspartate/ornithine carbamoyltransferase superfamily. OTCase family.

It is found in the cytoplasm. The enzyme catalyses carbamoyl phosphate + L-ornithine = L-citrulline + phosphate + H(+). It functions in the pathway amino-acid biosynthesis; L-arginine biosynthesis; L-arginine from L-ornithine and carbamoyl phosphate: step 1/3. Reversibly catalyzes the transfer of the carbamoyl group from carbamoyl phosphate (CP) to the N(epsilon) atom of ornithine (ORN) to produce L-citrulline. This Halalkalibacterium halodurans (strain ATCC BAA-125 / DSM 18197 / FERM 7344 / JCM 9153 / C-125) (Bacillus halodurans) protein is Ornithine carbamoyltransferase.